A 396-amino-acid polypeptide reads, in one-letter code: Anticodon nuclease (396 aa).

Its function is as follows. Anticodon endonuclease (ACNase) that triggers the cleavage ligation of tRNA(Lys). It is activated by T4 stp protein and masked by the prrD protein (the endonuclease subunit of EcoprrI). The prr locus restricts phage T4 mutants lacking polynucleotide kinase or RNA ligase; T4 mutants lacking these genes manifest a T4-induced anticodon nuclease (ACNase). It is thought that Stp and other T4-encoded ACNase factors counteract the masking agents, thus activating the latent ACNase. This chain is Anticodon nuclease, found in Escherichia coli.